Reading from the N-terminus, the 474-residue chain is Pyruvate kinase (474 aa).

Arginine 37 contacts substrate. Residues asparagine 39, serine 41, and aspartate 71 each coordinate K(+). 39–42 contributes to the ATP binding site; it reads NFSH. ATP is bound by residues arginine 78 and lysine 160. Glutamate 222 serves as a coordination point for Mg(2+). The substrate site is built by glycine 245, aspartate 246, and threonine 278. A Mg(2+)-binding site is contributed by aspartate 246.

It belongs to the pyruvate kinase family. Homotetramer. Mg(2+) is required as a cofactor. The cofactor is K(+).

It carries out the reaction pyruvate + ATP = phosphoenolpyruvate + ADP + H(+). The protein operates within carbohydrate degradation; glycolysis; pyruvate from D-glyceraldehyde 3-phosphate: step 5/5. The sequence is that of Pyruvate kinase (ttuE) from Agrobacterium vitis (Rhizobium vitis).